Here is a 257-residue protein sequence, read N- to C-terminus: Na(+)-translocating NADH-quinone reductase subunit C (257 aa).

The helical transmembrane segment at 13–33 (LTVVVLLSLICSLIVASAAVL) threads the bilayer. An FMN phosphoryl threonine modification is found at threonine 224.

Belongs to the NqrC family. Composed of six subunits; NqrA, NqrB, NqrC, NqrD, NqrE and NqrF. FMN serves as cofactor.

It localises to the cell inner membrane. It carries out the reaction a ubiquinone + n Na(+)(in) + NADH + H(+) = a ubiquinol + n Na(+)(out) + NAD(+). NQR complex catalyzes the reduction of ubiquinone-1 to ubiquinol by two successive reactions, coupled with the transport of Na(+) ions from the cytoplasm to the periplasm. NqrA to NqrE are probably involved in the second step, the conversion of ubisemiquinone to ubiquinol. This chain is Na(+)-translocating NADH-quinone reductase subunit C, found in Haemophilus ducreyi (strain 35000HP / ATCC 700724).